The following is a 260-amino-acid chain: Small ribosomal subunit protein eS4 (260 aa).

An S4 RNA-binding domain is found at 46 to 111 (VPLLILVRDM…RYRVVMNEHH (66 aa)).

It belongs to the eukaryotic ribosomal protein eS4 family.

In Methanopyrus kandleri (strain AV19 / DSM 6324 / JCM 9639 / NBRC 100938), this protein is Small ribosomal subunit protein eS4.